The sequence spans 198 residues: FMN-dependent NADH:quinone oxidoreductase (198 aa).

Residues serine 9 and 95–98 (MYNF) contribute to the FMN site.

The protein belongs to the azoreductase type 1 family. As to quaternary structure, homodimer. FMN serves as cofactor.

It carries out the reaction 2 a quinone + NADH + H(+) = 2 a 1,4-benzosemiquinone + NAD(+). The catalysed reaction is N,N-dimethyl-1,4-phenylenediamine + anthranilate + 2 NAD(+) = 2-(4-dimethylaminophenyl)diazenylbenzoate + 2 NADH + 2 H(+). Its function is as follows. Quinone reductase that provides resistance to thiol-specific stress caused by electrophilic quinones. Functionally, also exhibits azoreductase activity. Catalyzes the reductive cleavage of the azo bond in aromatic azo compounds to the corresponding amines. This is FMN-dependent NADH:quinone oxidoreductase from Alcanivorax borkumensis (strain ATCC 700651 / DSM 11573 / NCIMB 13689 / SK2).